A 333-amino-acid polypeptide reads, in one-letter code: Transaldolase (333 aa).

Lys136 (schiff-base intermediate with substrate) is an active-site residue.

The protein belongs to the transaldolase family. Type 1 subfamily. As to quaternary structure, homodimer.

Its subcellular location is the cytoplasm. The enzyme catalyses D-sedoheptulose 7-phosphate + D-glyceraldehyde 3-phosphate = D-erythrose 4-phosphate + beta-D-fructose 6-phosphate. Its pathway is carbohydrate degradation; pentose phosphate pathway; D-glyceraldehyde 3-phosphate and beta-D-fructose 6-phosphate from D-ribose 5-phosphate and D-xylulose 5-phosphate (non-oxidative stage): step 2/3. Transaldolase is important for the balance of metabolites in the pentose-phosphate pathway. This is Transaldolase from Acidobacterium capsulatum (strain ATCC 51196 / DSM 11244 / BCRC 80197 / JCM 7670 / NBRC 15755 / NCIMB 13165 / 161).